The chain runs to 498 residues: 3-octaprenyl-4-hydroxybenzoate carboxy-lyase (498 aa).

Residue asparagine 175 participates in Mn(2+) binding. Prenylated FMN-binding positions include 178–180 (IYR), 192–194 (RWL), and 197–198 (RG). Residue glutamate 241 coordinates Mn(2+). The active-site Proton donor is the aspartate 290.

It belongs to the UbiD family. Homohexamer. Prenylated FMN serves as cofactor. It depends on Mn(2+) as a cofactor.

Its subcellular location is the cell membrane. The enzyme catalyses a 4-hydroxy-3-(all-trans-polyprenyl)benzoate + H(+) = a 2-(all-trans-polyprenyl)phenol + CO2. The protein operates within cofactor biosynthesis; ubiquinone biosynthesis. Its function is as follows. Catalyzes the decarboxylation of 3-octaprenyl-4-hydroxy benzoate to 2-octaprenylphenol, an intermediate step in ubiquinone biosynthesis. This Yersinia pseudotuberculosis serotype I (strain IP32953) protein is 3-octaprenyl-4-hydroxybenzoate carboxy-lyase.